A 251-amino-acid chain; its full sequence is Segregation and condensation protein A (251 aa).

It belongs to the ScpA family. In terms of assembly, component of a cohesin-like complex composed of ScpA, ScpB and the Smc homodimer, in which ScpA and ScpB bind to the head domain of Smc. The presence of the three proteins is required for the association of the complex with DNA.

Its subcellular location is the cytoplasm. Participates in chromosomal partition during cell division. May act via the formation of a condensin-like complex containing Smc and ScpB that pull DNA away from mid-cell into both cell halves. This is Segregation and condensation protein A from Clostridium botulinum (strain Eklund 17B / Type B).